Reading from the N-terminus, the 361-residue chain is Cobalt-precorrin-5B C(1)-methyltransferase (361 aa).

This sequence belongs to the CbiD family.

It catalyses the reaction Co-precorrin-5B + S-adenosyl-L-methionine = Co-precorrin-6A + S-adenosyl-L-homocysteine. It participates in cofactor biosynthesis; adenosylcobalamin biosynthesis; cob(II)yrinate a,c-diamide from sirohydrochlorin (anaerobic route): step 6/10. Its function is as follows. Catalyzes the methylation of C-1 in cobalt-precorrin-5B to form cobalt-precorrin-6A. This is Cobalt-precorrin-5B C(1)-methyltransferase from Methanobrevibacter smithii (strain ATCC 35061 / DSM 861 / OCM 144 / PS).